A 101-amino-acid chain; its full sequence is MVYAIVRAGGRQEKVSVGDLVTLDRVPAETGGSVELPALMLVDGDEVKAGADAAGVKVTAEVVSHSRGKKVVIMKYKNKTGYKKRQGHRSELSTVKITGIA.

Belongs to the bacterial ribosomal protein bL21 family. In terms of assembly, part of the 50S ribosomal subunit. Contacts protein L20.

In terms of biological role, this protein binds to 23S rRNA in the presence of protein L20. The chain is Large ribosomal subunit protein bL21 from Micrococcus luteus (strain ATCC 4698 / DSM 20030 / JCM 1464 / CCM 169 / CCUG 5858 / IAM 1056 / NBRC 3333 / NCIMB 9278 / NCTC 2665 / VKM Ac-2230) (Micrococcus lysodeikticus).